Here is a 47-residue protein sequence, read N- to C-terminus: Large ribosomal subunit protein eL40 (47 aa).

It belongs to the eukaryotic ribosomal protein eL40 family.

In Methanococcus vannielii (strain ATCC 35089 / DSM 1224 / JCM 13029 / OCM 148 / SB), this protein is Large ribosomal subunit protein eL40.